Consider the following 501-residue polypeptide: Lysine--tRNA ligase (501 aa).

Mg(2+) contacts are provided by E404 and E411.

The protein belongs to the class-II aminoacyl-tRNA synthetase family. Homodimer. Requires Mg(2+) as cofactor.

It localises to the cytoplasm. It catalyses the reaction tRNA(Lys) + L-lysine + ATP = L-lysyl-tRNA(Lys) + AMP + diphosphate. This Campylobacter jejuni subsp. jejuni serotype O:2 (strain ATCC 700819 / NCTC 11168) protein is Lysine--tRNA ligase (lysS).